The primary structure comprises 334 residues: Putative 2-hydroxyacid dehydrogenase UNK4.10 (334 aa).

NAD(+) is bound by residues 166–167 (GI), 244–246 (TAR), and Asp-270. Residue Arg-246 is part of the active site. Residue Glu-275 is part of the active site. Residue His-293 is the Proton donor of the active site. 293-296 (HLGT) contacts NAD(+).

The protein belongs to the D-isomer specific 2-hydroxyacid dehydrogenase family.

This Schizosaccharomyces pombe (strain 972 / ATCC 24843) (Fission yeast) protein is Putative 2-hydroxyacid dehydrogenase UNK4.10.